An 866-amino-acid chain; its full sequence is Interleukin-17 receptor A (866 aa).

Positions 1-32 (MGAARSPPSAVPGPLLGLLLLLLGVLAPGGAS) are cleaved as a signal peptide. Topologically, residues 33 to 320 (LRLLDHRALV…EPIPDYMPLW (288 aa)) are extracellular. Cys-43 and Cys-50 are joined by a disulfide. N-linked (GlcNAc...) asparagine glycans are attached at residues Asn-49, Asn-54, and Asn-67. 2 disulfides stabilise this stretch: Cys-57–Cys-126 and Cys-185–Cys-196. Residues Asn-206, Asn-225, Asn-242, and Asn-265 are each glycosylated (N-linked (GlcNAc...) asparagine). Disulfide bonds link Cys-245/Cys-276, Cys-277/Cys-303, and Cys-290/Cys-294. Residues 321–341 (VYWFITGISILLVGSVILLIV) form a helical membrane-spanning segment. The Cytoplasmic portion of the chain corresponds to 342–866 (CMTWRLAGPG…MGSESEGPSA (525 aa)). In terms of domain architecture, SEFIR spans 377–534 (PRKVWIIYSA…LMDRFEEVYF (158 aa)). Ser-708 and Ser-736 each carry phosphoserine. 2 disordered regions span residues 717-736 (LFLPVDPEDSPLGSSTPMAS) and 773-840 (MVLT…RSLQ). Polar residues predominate over residues 788–801 (QSVQSDQGYISRSS). Acidic residues predominate over residues 809 to 819 (TEMEEEEEEEQ).

As to quaternary structure, forms heterodimers with IL17RC; the heterodimer binds IL17A and IL17F homodimers as well as the heterodimer formed by IL17A and IL17F. Forms complexes with 2:1 binding stoichiometry: two receptor chains for one interleukin molecule. IL17A homodimer preferentially drives the formation of IL17RA-IL17RC heterodimeric receptor complex, whereas IL17F homodimer forms predominantly complexes with IL17RC homodimer. IL17A homodimer adopts an asymmetrical ternary structure with one IL17RA molecule, allowing for high affinity interactions of one IL17A monomer with one IL17RA molecule (via D1 and D2 domains), while disfavoring binding of a second IL17RA molecule on the other IL17A monomer. IL17A-IL17F forms complexes with IL17RA-IL17RC, but with lower affinity when compared to IL17A homodimer. IL17RA chain cannot distinguish between IL17A and IL17F molecules, potentially enabling the formation of topologically distinct complexes. Interacts with TRAF3IP2. Forms heterodimers with IL17RE; the heterodimer binds IL17C. In terms of assembly, (Microbial infection) Interacts with SARS coronavirus-2/SARS-CoV-2 virus protein ORF8. Post-translationally, glycosylated. In terms of tissue distribution, widely expressed.

It is found in the cell membrane. It localises to the secreted. Functionally, receptor for IL17A and IL17F, major effector cytokines of innate and adaptive immune system involved in antimicrobial host defense and maintenance of tissue integrity. Receptor for IL17A. Receptor for IL17F. Binds to IL17A with higher affinity than to IL17F. Binds IL17A and IL17F homodimers as part of a heterodimeric complex with IL17RC. Also binds heterodimers formed by IL17A and IL17F as part of a heterodimeric complex with IL17RC. Cytokine binding triggers homotypic interaction of IL17RA and IL17RC chains with TRAF3IP2 adapter, leading to TRAF6-mediated activation of NF-kappa-B and MAPkinase pathways, ultimately resulting in transcriptional activation of cytokines, chemokines, antimicrobial peptides and matrix metalloproteinases, with potential strong immune inflammation. Involved in antimicrobial host defense primarily promoting neutrophil activation and recruitment at infection sites to destroy extracellular bacteria and fungi. In secondary lymphoid organs, contributes to germinal center formation by regulating the chemotactic response of B cells to CXCL12 and CXCL13, enhancing retention of B cells within the germinal centers, B cell somatic hypermutation rate and selection toward plasma cells. Plays a role in the maintenance of the integrity of epithelial barriers during homeostasis and pathogen infection. Stimulates the production of antimicrobial beta-defensins DEFB1, DEFB103A, and DEFB104A by mucosal epithelial cells, limiting the entry of microbes through the epithelial barriers. Involved in antiviral host defense through various mechanisms. Enhances immunity against West Nile virus by promoting T cell cytotoxicity. Contributes to Influenza virus clearance by driving the differentiation of B-1a B cells, providing for production of virus-specific IgM antibodies at first line of host defense. Receptor for IL17C as part of a heterodimeric complex with IL17RE. (Microbial infection) Receptor for SARS coronavirus-2/SARS-CoV-2 virus protein ORF8, leading to IL17 pathway activation and an increased secretion of pro-inflammatory factors through activating NF-kappa-B signaling pathway. The sequence is that of Interleukin-17 receptor A from Homo sapiens (Human).